The primary structure comprises 293 residues: D-alanine--D-alanine ligase (293 aa).

Residues 98–291 enclose the ATP-grasp domain; it reads KIIWEQHSLT…FNKLVTSIIN (194 aa). Residue 124-177 coordinates ATP; that stretch reads NFPLPWAVKPTLEGSSIGISKVDNQMQLNDALMLAWQYAPYALIEQWIKGDEYT. Asp-245, Glu-258, and Asn-260 together coordinate Mg(2+).

Belongs to the D-alanine--D-alanine ligase family. Mg(2+) serves as cofactor. Mn(2+) is required as a cofactor.

Its subcellular location is the cytoplasm. It catalyses the reaction 2 D-alanine + ATP = D-alanyl-D-alanine + ADP + phosphate + H(+). Its pathway is cell wall biogenesis; peptidoglycan biosynthesis. In terms of biological role, cell wall formation. This chain is D-alanine--D-alanine ligase, found in Vesicomyosocius okutanii subsp. Calyptogena okutanii (strain HA).